The following is a 137-amino-acid chain: MGAHLVRRYLGDASVEPDPLQMPTFPPDYGFPERKEREMVATQQEMMDAQLRLQLRDYCAHHLIRLLKCKRDSFPNFLACKQERHDWDYCEHRDYVMRMKEFERERRLLQRKKRREKKAAELAKGQGPGEVDPKVAL.

G2 carries the N-myristoyl glycine lipid modification. One can recognise a CHCH domain in the interval 56–98 (RDYCAHHLIRLLKCKRDSFPNFLACKQERHDWDYCEHRDYVMR). The short motif at 59-69 (CAHHLIRLLKC) is the Cx9C motif 1 element. Disulfide bonds link C59-C90 and C69-C80. S73 is subject to Phosphoserine. The Cx9C motif 2 signature appears at 80–90 (CKQERHDWDYC). The disordered stretch occupies residues 113 to 137 (KRREKKAAELAKGQGPGEVDPKVAL).

It belongs to the complex I NDUFB7 subunit family. As to quaternary structure, complex I is composed of 45 different subunits.

It is found in the mitochondrion inner membrane. The protein resides in the mitochondrion intermembrane space. Its function is as follows. Accessory subunit of the mitochondrial membrane respiratory chain NADH dehydrogenase (Complex I), that is believed not to be involved in catalysis. Complex I functions in the transfer of electrons from NADH to the respiratory chain. The immediate electron acceptor for the enzyme is believed to be ubiquinone. This chain is NADH dehydrogenase [ubiquinone] 1 beta subcomplex subunit 7 (NDUFB7), found in Homo sapiens (Human).